The sequence spans 498 residues: Ribose import ATP-binding protein RbsA 1 (498 aa).

ABC transporter domains follow at residues Leu-7–Arg-243 and Pro-254–Ser-496. Gly-39–Ser-46 is a binding site for ATP.

Belongs to the ABC transporter superfamily. Ribose importer (TC 3.A.1.2.1) family. In terms of assembly, the complex is composed of an ATP-binding protein (RbsA), two transmembrane proteins (RbsC) and a solute-binding protein (RbsB).

It localises to the cell inner membrane. The catalysed reaction is D-ribose(out) + ATP + H2O = D-ribose(in) + ADP + phosphate + H(+). Part of the ABC transporter complex RbsABC involved in ribose import. Responsible for energy coupling to the transport system. The sequence is that of Ribose import ATP-binding protein RbsA 1 from Pasteurella multocida (strain Pm70).